Consider the following 533-residue polypeptide: Probable galacturonosyltransferase 13 (533 aa).

Topologically, residues M1–H40 are cytoplasmic. Residues T41 to L61 traverse the membrane as a helical; Signal-anchor for type II membrane protein segment. Topologically, residues E62–E533 are lumenal. Residues N306, N396, N445, and N520 are each glycosylated (N-linked (GlcNAc...) asparagine).

The protein belongs to the glycosyltransferase 8 family. As to expression, expressed in roots, inflorescences, siliques, leaves and stems. Accumulates in pollen grains.

The protein resides in the golgi apparatus membrane. The protein operates within glycan metabolism; pectin biosynthesis. May be involved in pectin and/or xylans biosynthesis in cell walls. Together with GAUT14, required for pollen tube growth, possibly through the regulation of pectin biosynthesis and repartition in the pollen tube wall. This is Probable galacturonosyltransferase 13 from Arabidopsis thaliana (Mouse-ear cress).